A 100-amino-acid chain; its full sequence is Large ribosomal subunit protein uL23 (100 aa).

The protein belongs to the universal ribosomal protein uL23 family. In terms of assembly, part of the 50S ribosomal subunit. Contacts protein L29, and trigger factor when it is bound to the ribosome.

In terms of biological role, one of the early assembly proteins it binds 23S rRNA. One of the proteins that surrounds the polypeptide exit tunnel on the outside of the ribosome. Forms the main docking site for trigger factor binding to the ribosome. This Synechococcus sp. (strain CC9605) protein is Large ribosomal subunit protein uL23.